A 322-amino-acid polypeptide reads, in one-letter code: Putative MgpC-like protein MPN_367 (322 aa).

Residues 1 to 48 (MVGSGAAGSASSLQGNGSNSSGLKSLLRSAPVSVPPSSTSNQTLSLSN) show a composition bias toward low complexity. Disordered regions lie at residues 1–59 (MVGS…AVVS) and 118–145 (DATS…EPAL). Residues 120–134 (TSTNLPHAAGASQTG) show a composition bias toward polar residues.

This sequence belongs to the MgpC family.

The sequence is that of Putative MgpC-like protein MPN_367 from Mycoplasma pneumoniae (strain ATCC 29342 / M129 / Subtype 1) (Mycoplasmoides pneumoniae).